A 539-amino-acid polypeptide reads, in one-letter code: Chaperonin GroEL 2 (539 aa).

ATP contacts are provided by residues 29–32, 86–90, Gly413, 477–479, and Asp493; these read TLGP, DGTTT, and NAA. Residues 519–539 are disordered; the sequence is VVDKPEEEDSAAAGHGHGHSH.

Belongs to the chaperonin (HSP60) family. In terms of assembly, forms a cylinder of 14 subunits composed of two heptameric rings stacked back-to-back. Interacts with the co-chaperonin GroES.

The protein localises to the cytoplasm. The catalysed reaction is ATP + H2O + a folded polypeptide = ADP + phosphate + an unfolded polypeptide.. Its function is as follows. Together with its co-chaperonin GroES, plays an essential role in assisting protein folding. The GroEL-GroES system forms a nano-cage that allows encapsulation of the non-native substrate proteins and provides a physical environment optimized to promote and accelerate protein folding. The sequence is that of Chaperonin GroEL 2 from Saccharopolyspora erythraea (strain ATCC 11635 / DSM 40517 / JCM 4748 / NBRC 13426 / NCIMB 8594 / NRRL 2338).